A 377-amino-acid polypeptide reads, in one-letter code: Nitric oxide reductase FlRd-NAD(+) reductase (377 aa).

This sequence belongs to the FAD-dependent oxidoreductase family. The cofactor is FAD.

The protein localises to the cytoplasm. It carries out the reaction 2 reduced [nitric oxide reductase rubredoxin domain] + NAD(+) + H(+) = 2 oxidized [nitric oxide reductase rubredoxin domain] + NADH. Its pathway is nitrogen metabolism; nitric oxide reduction. Its function is as follows. One of at least two accessory proteins for anaerobic nitric oxide (NO) reductase. Reduces the rubredoxin moiety of NO reductase. This is Nitric oxide reductase FlRd-NAD(+) reductase from Salmonella arizonae (strain ATCC BAA-731 / CDC346-86 / RSK2980).